A 499-amino-acid polypeptide reads, in one-letter code: Glycerol kinase (499 aa).

Position 13 (threonine 13) interacts with ADP. Residues threonine 13, threonine 14, and serine 15 each contribute to the ATP site. Threonine 13 is a binding site for sn-glycerol 3-phosphate. Residue arginine 17 coordinates ADP. Sn-glycerol 3-phosphate is bound by residues arginine 83, glutamate 84, tyrosine 135, and aspartate 245. The glycerol site is built by arginine 83, glutamate 84, tyrosine 135, aspartate 245, and glutamine 246. ADP contacts are provided by threonine 267 and glycine 310. ATP-binding residues include threonine 267, glycine 310, glutamine 314, and alanine 411. Alanine 411 and asparagine 415 together coordinate ADP.

It belongs to the FGGY kinase family.

It catalyses the reaction glycerol + ATP = sn-glycerol 3-phosphate + ADP + H(+). Its pathway is polyol metabolism; glycerol degradation via glycerol kinase pathway; sn-glycerol 3-phosphate from glycerol: step 1/1. Inhibited by fructose 1,6-bisphosphate (FBP). Its function is as follows. Key enzyme in the regulation of glycerol uptake and metabolism. Catalyzes the phosphorylation of glycerol to yield sn-glycerol 3-phosphate. The polypeptide is Glycerol kinase (Xylella fastidiosa (strain M12)).